The sequence spans 473 residues: Cardiolipin synthase C (473 aa).

PLD phosphodiesterase domains follow at residues 125 to 152 (LNRR…GDAY) and 364 to 391 (SGAS…DPRS). Residues His130, Lys132, Asp137, His369, Lys371, and Asp376 contribute to the active site.

The protein belongs to the phospholipase D family. Cardiolipin synthase subfamily. ClsC sub-subfamily.

It catalyses the reaction a 1,2-diacyl-sn-glycero-3-phospho-(1'-sn-glycerol) + a 1,2-diacyl-sn-glycero-3-phosphoethanolamine = a cardiolipin + ethanolamine. With respect to regulation, full activity requires coexpression with the neighboring gene ymdB. In terms of biological role, catalyzes the synthesis of cardiolipin (CL) (diphosphatidylglycerol) from phosphatidylglycerol (PG) and phosphatidylethanolamine (PE). This is Cardiolipin synthase C from Escherichia coli (strain K12).